A 193-amino-acid chain; its full sequence is NADH-quinone oxidoreductase subunit B (193 aa).

4 residues coordinate [4Fe-4S] cluster: C72, C73, C137, and C167.

Belongs to the complex I 20 kDa subunit family. In terms of assembly, NDH-1 is composed of 14 different subunits. Subunits NuoB, C, D, E, F, and G constitute the peripheral sector of the complex. It depends on [4Fe-4S] cluster as a cofactor.

It is found in the cell inner membrane. The enzyme catalyses a quinone + NADH + 5 H(+)(in) = a quinol + NAD(+) + 4 H(+)(out). Functionally, NDH-1 shuttles electrons from NADH, via FMN and iron-sulfur (Fe-S) centers, to quinones in the respiratory chain. The immediate electron acceptor for the enzyme in this species is believed to be ubiquinone. Couples the redox reaction to proton translocation (for every two electrons transferred, four hydrogen ions are translocated across the cytoplasmic membrane), and thus conserves the redox energy in a proton gradient. The protein is NADH-quinone oxidoreductase subunit B of Bartonella bacilliformis (strain ATCC 35685 / KC583 / Herrer 020/F12,63).